We begin with the raw amino-acid sequence, 150 residues long: Group IIC secretory phospholipase A2 (150 aa).

The N-terminal stretch at 1 to 20 is a signal peptide; the sequence is MKGIAVFLVFIFCWTTSTLS. 8 disulfide bridges follow: cysteine 46/cysteine 143, cysteine 48/cysteine 64, cysteine 63/cysteine 121, cysteine 69/cysteine 150, cysteine 70/cysteine 114, cysteine 79/cysteine 107, cysteine 97/cysteine 112, and cysteine 99/cysteine 105. Tyrosine 47, glycine 49, and glycine 51 together coordinate Ca(2+). Residue histidine 67 is part of the active site. Aspartate 68 is a binding site for Ca(2+). N-linked (GlcNAc...) asparagine glycosylation occurs at asparagine 92. Aspartate 115 is a catalytic residue.

This sequence belongs to the phospholipase A2 family. Ca(2+) serves as cofactor.

It is found in the secreted. It carries out the reaction a 1,2-diacyl-sn-glycero-3-phosphocholine + H2O = a 1-acyl-sn-glycero-3-phosphocholine + a fatty acid + H(+). In terms of biological role, PA2 catalyzes the calcium-dependent hydrolysis of the 2-acyl groups in 3-sn-phosphoglycerides. The sequence is that of Group IIC secretory phospholipase A2 (Pla2g2c) from Rattus norvegicus (Rat).